We begin with the raw amino-acid sequence, 27 residues long: Equinin A (27 aa).

Positions 1–13 (AVDKGGGKAEKKD) are enriched in basic and acidic residues. Residues 1–27 (AVDKGGGKAEKKDGNRKKKLAGGEGGG) form a disordered region.

It localises to the secreted. Peptide with unknown function. Does not show antimicrobial and hemolytic activities. This Actinia equina (Beadlet anemone) protein is Equinin A.